We begin with the raw amino-acid sequence, 173 residues long: Photosystem I assembly protein Ycf3 (173 aa).

TPR repeat units follow at residues 35–68 (AFAYYRDGMSAQADGEYAEALENYQAALELEEDP), 72–105 (SYILYNIGLIHASNGEHEKALEYYHQALELNPRM), and 113–146 (AVIYHYLGTQAEEQQRLEEAEQFFDRAADYWKRA).

The protein belongs to the Ycf3 family.

The protein localises to the cellular thylakoid membrane. Its function is as follows. Essential for the assembly of the photosystem I (PSI) complex. May act as a chaperone-like factor to guide the assembly of the PSI subunits. This Thermosynechococcus vestitus (strain NIES-2133 / IAM M-273 / BP-1) protein is Photosystem I assembly protein Ycf3.